Reading from the N-terminus, the 261-residue chain is Prostatic glandular kallikrein-6 (261 aa).

Residues 1–18 (MWLLILFLILSLGWNDAA) form the signal peptide. Positions 19–24 (PPGQSR) are cleaved as a propeptide — activation peptide. In terms of domain architecture, Peptidase S1 spans 25 to 258 (IIGGFNCEKN…FTSWMKKVMK (234 aa)). 5 disulfides stabilise this stretch: C31–C173, C50–C66, C152–C219, C184–C198, and C209–C234. The active-site Charge relay system is H65. A glycan (N-linked (GlcNAc...) asparagine) is linked at N108. The active-site Charge relay system is D120. The active-site Charge relay system is S213.

Belongs to the peptidase S1 family. Kallikrein subfamily.

It carries out the reaction Preferential cleavage of Arg-|-Xaa bonds in small molecule substrates. Highly selective action to release kallidin (lysyl-bradykinin) from kininogen involves hydrolysis of Met-|-Xaa or Leu-|-Xaa.. Glandular kallikreins cleave Met-Lys and Arg-Ser bonds in kininogen to release Lys-bradykinin. This Rattus norvegicus (Rat) protein is Prostatic glandular kallikrein-6 (Klk6).